A 265-amino-acid polypeptide reads, in one-letter code: Thiazole synthase (265 aa).

Catalysis depends on lysine 103, which acts as the Schiff-base intermediate with DXP. 1-deoxy-D-xylulose 5-phosphate is bound by residues glycine 164, 190–191 (AG), and 212–213 (NT).

The protein belongs to the ThiG family. As to quaternary structure, homotetramer. Forms heterodimers with either ThiH or ThiS.

It localises to the cytoplasm. The enzyme catalyses [ThiS sulfur-carrier protein]-C-terminal-Gly-aminoethanethioate + 2-iminoacetate + 1-deoxy-D-xylulose 5-phosphate = [ThiS sulfur-carrier protein]-C-terminal Gly-Gly + 2-[(2R,5Z)-2-carboxy-4-methylthiazol-5(2H)-ylidene]ethyl phosphate + 2 H2O + H(+). The protein operates within cofactor biosynthesis; thiamine diphosphate biosynthesis. Catalyzes the rearrangement of 1-deoxy-D-xylulose 5-phosphate (DXP) to produce the thiazole phosphate moiety of thiamine. Sulfur is provided by the thiocarboxylate moiety of the carrier protein ThiS. In vitro, sulfur can be provided by H(2)S. This is Thiazole synthase from Bordetella pertussis (strain Tohama I / ATCC BAA-589 / NCTC 13251).